A 376-amino-acid chain; its full sequence is Nuclear hormone receptor family member nhr-124 (376 aa).

Residues 11 to 89 (PNICAICHQK…LGMRYHNSSE (79 aa)) constitute a DNA-binding region (nuclear receptor). 2 consecutive NR C4-type zinc fingers follow at residues 14–34 (CAIC…CNAC) and 50–72 (CKKG…CRSC). Positions 125–371 (HLHALNETRY…FSKILTEACR (247 aa)) constitute an NR LBD domain.

The protein belongs to the nuclear hormone receptor family.

It localises to the nucleus. Orphan nuclear receptor. This Caenorhabditis elegans protein is Nuclear hormone receptor family member nhr-124 (nhr-124).